Reading from the N-terminus, the 362-residue chain is tRNA N6-adenosine threonylcarbamoyltransferase (362 aa).

Fe cation-binding residues include His-120 and His-124. Substrate contacts are provided by residues 142 to 146 (LASGG), Asp-175, Gly-188, and Asn-288. Asp-316 provides a ligand contact to Fe cation. Residues 342–351 (RPRWPLDPDA) show a composition bias toward basic and acidic residues. The tract at residues 342–362 (RPRWPLDPDAPKAAGAGGVKA) is disordered.

Belongs to the KAE1 / TsaD family. It depends on Fe(2+) as a cofactor.

Its subcellular location is the cytoplasm. The catalysed reaction is L-threonylcarbamoyladenylate + adenosine(37) in tRNA = N(6)-L-threonylcarbamoyladenosine(37) in tRNA + AMP + H(+). Required for the formation of a threonylcarbamoyl group on adenosine at position 37 (t(6)A37) in tRNAs that read codons beginning with adenine. Is involved in the transfer of the threonylcarbamoyl moiety of threonylcarbamoyl-AMP (TC-AMP) to the N6 group of A37, together with TsaE and TsaB. TsaD likely plays a direct catalytic role in this reaction. The chain is tRNA N6-adenosine threonylcarbamoyltransferase from Rhodospirillum rubrum (strain ATCC 11170 / ATH 1.1.1 / DSM 467 / LMG 4362 / NCIMB 8255 / S1).